The chain runs to 269 residues: Cytochrome c oxidase subunit 3 (269 aa).

7 helical membrane passes run 24–44 (FYNSLSLFILTTSGVLTMHGF), 46–66 (NMYIILFIAFINLVWCMTLWF), 90–110 (GVGLFIASEALFFLAIFWTFF), 132–152 (IDPFELPLLNNIILLSSGVTV), 167–187 (ALYGLVATILLAIVFTIFQGI), 207–227 (FSTGFHGFHVLIGTAFLSVGL), and 247–267 (ILYWHFVDVVWLILYVCIYFW).

Belongs to the cytochrome c oxidase subunit 3 family. In terms of assembly, component of the cytochrome c oxidase (complex IV, CIV), a multisubunit enzyme composed of a catalytic core of 3 subunits and several supernumerary subunits. The complex exists as a monomer or a dimer and forms supercomplexes (SCs) in the inner mitochondrial membrane with ubiquinol-cytochrome c oxidoreductase (cytochrome b-c1 complex, complex III, CIII).

Its subcellular location is the mitochondrion inner membrane. It carries out the reaction 4 Fe(II)-[cytochrome c] + O2 + 8 H(+)(in) = 4 Fe(III)-[cytochrome c] + 2 H2O + 4 H(+)(out). In terms of biological role, component of the cytochrome c oxidase, the last enzyme in the mitochondrial electron transport chain which drives oxidative phosphorylation. The respiratory chain contains 3 multisubunit complexes succinate dehydrogenase (complex II, CII), ubiquinol-cytochrome c oxidoreductase (cytochrome b-c1 complex, complex III, CIII) and cytochrome c oxidase (complex IV, CIV), that cooperate to transfer electrons derived from NADH and succinate to molecular oxygen, creating an electrochemical gradient over the inner membrane that drives transmembrane transport and the ATP synthase. Cytochrome c oxidase is the component of the respiratory chain that catalyzes the reduction of oxygen to water. Electrons originating from reduced cytochrome c in the intermembrane space (IMS) are transferred via the dinuclear copper A center (CU(A)) of subunit 2 and heme A of subunit 1 to the active site in subunit 1, a binuclear center (BNC) formed by heme A3 and copper B (CU(B)). The BNC reduces molecular oxygen to 2 water molecules using 4 electrons from cytochrome c in the IMS and 4 protons from the mitochondrial matrix. This Trichophyton rubrum (Athlete's foot fungus) protein is Cytochrome c oxidase subunit 3 (COXIII).